Consider the following 330-residue polypeptide: MWGLKVVLLLPVMSSALYPEEILDTQWELWKKTYRKQYNSKVDEISRRLIWEKNLKHISIHNLEASLGVHTYELAMNHLGDMTSEEVVQKMTGLKVPPSHSRSNDTLYIPDWEGRTPDSIDYRKKGYVTPVKNQGQCGSCWAFSSVGALEGQLKKKTGKLLNLSPQNLVDCVSENDGCGGGYMTNAFQYVQKNRGIDSEDAYPYVGQDENCMYNPTGKAAKCRGYREIPEGNEKALKRAVARVGPVSVAIDASLTSFQFYSKGVYYDENCNSDNLNHAVLAVGYGIQKGKKHWIIKNSWGENWGNKGYILMARNKNNACGIANLASFPKM.

A signal peptide spans 1 to 16 (MWGLKVVLLLPVMSSA). Residues 17–115 (LYPEEILDTQ…TLYIPDWEGR (99 aa)) constitute a propeptide, activation peptide. N-linked (GlcNAc...) asparagine glycosylation is present at asparagine 104. 3 cysteine pairs are disulfide-bonded: cysteine 137/cysteine 178, cysteine 171/cysteine 211, and cysteine 270/cysteine 319. Residue cysteine 140 is part of the active site. Catalysis depends on residues histidine 277 and asparagine 297.

This sequence belongs to the peptidase C1 family. As to expression, expressed in the thyroid epithelial cells.

It localises to the lysosome. It is found in the secreted. Its subcellular location is the apical cell membrane. The catalysed reaction is Broad proteolytic activity. With small-molecule substrates and inhibitors, the major determinant of specificity is P2, which is preferably Leu, Met &gt; Phe, and not Arg.. Functionally, thiol protease involved in osteoclastic bone resorption and may participate partially in the disorder of bone remodeling. Displays potent endoprotease activity against fibrinogen at acid pH. May play an important role in extracellular matrix degradation. Involved in the release of thyroid hormone thyroxine (T4) by limited proteolysis of TG/thyroglobulin in the thyroid follicle lumen. In Sus scrofa (Pig), this protein is Cathepsin K (CTSK).